The chain runs to 269 residues: Hydroxyethylthiazole kinase (269 aa).

A substrate-binding site is contributed by Met-45. ATP-binding residues include Arg-121 and Thr-167. Gly-194 serves as a coordination point for substrate.

Belongs to the Thz kinase family. It depends on Mg(2+) as a cofactor.

It carries out the reaction 5-(2-hydroxyethyl)-4-methylthiazole + ATP = 4-methyl-5-(2-phosphooxyethyl)-thiazole + ADP + H(+). The protein operates within cofactor biosynthesis; thiamine diphosphate biosynthesis; 4-methyl-5-(2-phosphoethyl)-thiazole from 5-(2-hydroxyethyl)-4-methylthiazole: step 1/1. Functionally, catalyzes the phosphorylation of the hydroxyl group of 4-methyl-5-beta-hydroxyethylthiazole (THZ). In Bacillus cereus (strain ATCC 14579 / DSM 31 / CCUG 7414 / JCM 2152 / NBRC 15305 / NCIMB 9373 / NCTC 2599 / NRRL B-3711), this protein is Hydroxyethylthiazole kinase.